The chain runs to 330 residues: tRNA U34 carboxymethyltransferase (330 aa).

Residues Lys-91, Trp-105, Lys-110, Gly-130, 152–154 (DPS), 181–182 (IE), Met-196, Tyr-200, and Arg-315 each bind carboxy-S-adenosyl-L-methionine.

Belongs to the class I-like SAM-binding methyltransferase superfamily. CmoB family. Homotetramer.

It catalyses the reaction carboxy-S-adenosyl-L-methionine + 5-hydroxyuridine(34) in tRNA = 5-carboxymethoxyuridine(34) in tRNA + S-adenosyl-L-homocysteine + H(+). Catalyzes carboxymethyl transfer from carboxy-S-adenosyl-L-methionine (Cx-SAM) to 5-hydroxyuridine (ho5U) to form 5-carboxymethoxyuridine (cmo5U) at position 34 in tRNAs. The sequence is that of tRNA U34 carboxymethyltransferase from Shewanella loihica (strain ATCC BAA-1088 / PV-4).